Consider the following 297-residue polypeptide: Protein BCCIP homolog (297 aa).

The interval 1-40 (MSANKQKKLSTMEVDPNEDVSSSSEDDDDDEPHPDAYKGN) is disordered.

This sequence belongs to the BCP1 family.

This Drosophila melanogaster (Fruit fly) protein is Protein BCCIP homolog.